We begin with the raw amino-acid sequence, 429 residues long: Serine--tRNA ligase (429 aa).

L-serine is bound at residue 235–237 (TAE). 266–268 (RSE) serves as a coordination point for ATP. Glu-289 contributes to the L-serine binding site. 353–356 (EISS) serves as a coordination point for ATP. Ser-389 serves as a coordination point for L-serine.

This sequence belongs to the class-II aminoacyl-tRNA synthetase family. Type-1 seryl-tRNA synthetase subfamily. Homodimer. The tRNA molecule binds across the dimer.

It localises to the cytoplasm. The enzyme catalyses tRNA(Ser) + L-serine + ATP = L-seryl-tRNA(Ser) + AMP + diphosphate + H(+). It catalyses the reaction tRNA(Sec) + L-serine + ATP = L-seryl-tRNA(Sec) + AMP + diphosphate + H(+). Its pathway is aminoacyl-tRNA biosynthesis; selenocysteinyl-tRNA(Sec) biosynthesis; L-seryl-tRNA(Sec) from L-serine and tRNA(Sec): step 1/1. Catalyzes the attachment of serine to tRNA(Ser). Is also able to aminoacylate tRNA(Sec) with serine, to form the misacylated tRNA L-seryl-tRNA(Sec), which will be further converted into selenocysteinyl-tRNA(Sec). The sequence is that of Serine--tRNA ligase from Histophilus somni (strain 2336) (Haemophilus somnus).